Reading from the N-terminus, the 118-residue chain is Basic phospholipase A2 3 (118 aa).

Intrachain disulfides connect cysteine 11-cysteine 71, cysteine 27-cysteine 117, cysteine 29-cysteine 45, cysteine 44-cysteine 98, cysteine 51-cysteine 91, cysteine 60-cysteine 84, and cysteine 78-cysteine 89. Ca(2+)-binding residues include tyrosine 28, glycine 30, and glycine 32. Histidine 48 is a catalytic residue. Aspartate 49 is a binding site for Ca(2+). The active site involves aspartate 92.

The protein belongs to the phospholipase A2 family. Group I subfamily. D49 sub-subfamily. In terms of assembly, monomer. Requires Ca(2+) as cofactor. In terms of tissue distribution, expressed by the venom gland.

The protein localises to the secreted. The enzyme catalyses a 1,2-diacyl-sn-glycero-3-phosphocholine + H2O = a 1-acyl-sn-glycero-3-phosphocholine + a fatty acid + H(+). PLA2 catalyzes the calcium-dependent hydrolysis of the 2-acyl groups in 3-sn-phosphoglycerides. The polypeptide is Basic phospholipase A2 3 (Laticauda semifasciata (Black-banded sea krait)).